The chain runs to 194 residues: Ribonuclease HII (194 aa).

The 191-residue stretch at 3-193 folds into the RNase H type-2 domain; the sequence is ILTAGVDEAG…VRNLFAQQAL (191 aa). The a divalent metal cation site is built by aspartate 9, glutamate 10, and aspartate 101.

This sequence belongs to the RNase HII family. Mn(2+) serves as cofactor. It depends on Mg(2+) as a cofactor.

The protein resides in the cytoplasm. It carries out the reaction Endonucleolytic cleavage to 5'-phosphomonoester.. In terms of biological role, endonuclease that specifically degrades the RNA of RNA-DNA hybrids. This is Ribonuclease HII from Neisseria meningitidis serogroup C / serotype 2a (strain ATCC 700532 / DSM 15464 / FAM18).